The primary structure comprises 332 residues: Methionyl-tRNA formyltransferase (332 aa).

124-127 contributes to the (6S)-5,6,7,8-tetrahydrofolate binding site; that stretch reads SLLP.

Belongs to the Fmt family.

The catalysed reaction is L-methionyl-tRNA(fMet) + (6R)-10-formyltetrahydrofolate = N-formyl-L-methionyl-tRNA(fMet) + (6S)-5,6,7,8-tetrahydrofolate + H(+). Its function is as follows. Attaches a formyl group to the free amino group of methionyl-tRNA(fMet). The formyl group appears to play a dual role in the initiator identity of N-formylmethionyl-tRNA by promoting its recognition by IF2 and preventing the misappropriation of this tRNA by the elongation apparatus. The protein is Methionyl-tRNA formyltransferase of Polynucleobacter asymbioticus (strain DSM 18221 / CIP 109841 / QLW-P1DMWA-1) (Polynucleobacter necessarius subsp. asymbioticus).